The sequence spans 253 residues: Triosephosphate isomerase, cytosolic (253 aa).

Residues Asn-10 and Lys-12 each contribute to the substrate site. His-96 (electrophile) is an active-site residue. Catalysis depends on Glu-166, which acts as the Proton acceptor.

Belongs to the triosephosphate isomerase family. In terms of assembly, homodimer. As to expression, starchy endosperm.

The protein localises to the cytoplasm. It catalyses the reaction D-glyceraldehyde 3-phosphate = dihydroxyacetone phosphate. Its pathway is carbohydrate biosynthesis; gluconeogenesis. It participates in carbohydrate degradation; glycolysis; D-glyceraldehyde 3-phosphate from glycerone phosphate: step 1/1. The chain is Triosephosphate isomerase, cytosolic from Hordeum vulgare (Barley).